The chain runs to 130 residues: Small ribosomal subunit protein uS9 (130 aa).

The protein belongs to the universal ribosomal protein uS9 family.

In Edwardsiella ictaluri (strain 93-146), this protein is Small ribosomal subunit protein uS9.